A 122-amino-acid polypeptide reads, in one-letter code: Large ribosomal subunit protein uL14 (122 aa).

Belongs to the universal ribosomal protein uL14 family. Part of the 50S ribosomal subunit. Forms a cluster with proteins L3 and L19. In the 70S ribosome, L14 and L19 interact and together make contacts with the 16S rRNA in bridges B5 and B8.

Binds to 23S rRNA. Forms part of two intersubunit bridges in the 70S ribosome. The protein is Large ribosomal subunit protein uL14 of Psychrobacter sp. (strain PRwf-1).